The chain runs to 313 residues: Ribonuclease HIII (313 aa).

The tract at residues 63-85 (ARWGTAEPQEKKKTAKKPADPRY) is disordered. Positions 70–82 (PQEKKKTAKKPAD) are enriched in basic and acidic residues. The region spanning 94–310 (MSVIGSDEVG…TQKAQRLADK (217 aa)) is the RNase H type-2 domain. A divalent metal cation is bound by residues aspartate 100, glutamate 101, and aspartate 205.

The protein belongs to the RNase HII family. RnhC subfamily. In terms of assembly, interacts with the RNA polymerase core. The cofactor is Mn(2+). Requires Mg(2+) as cofactor.

Its subcellular location is the cytoplasm. It carries out the reaction Endonucleolytic cleavage to 5'-phosphomonoester.. Functionally, endonuclease that specifically degrades the RNA of RNA-DNA hybrids. The polypeptide is Ribonuclease HIII (rnhC) (Bacillus subtilis (strain 168)).